Consider the following 324-residue polypeptide: Sex-lethal homolog (324 aa).

RRM domains are found at residues 102-180 and 188-268; these read TNLI…YARP and TNLY…LAEE.

In terms of tissue distribution, expressed in somatic cells of both sexes throughout development, but not in the pole cells which are the progenitors of the germline.

The protein resides in the nucleus. Unknown; apparently not involved in somatic sex determination. The polypeptide is Sex-lethal homolog (SXL) (Musca domestica (House fly)).